Here is a 616-residue protein sequence, read N- to C-terminus: TAF6-like RNA polymerase II p300/CBP-associated factor-associated factor 65 kDa subunit 6L (616 aa).

Disordered regions lie at residues 399-432 (SLLLQESPPGGSSETGFGSGLPPPSGVAGPEDPS) and 455-539 (FGTG…GTRD). Residues S494 and S500 each carry the phosphoserine modification. Residues R549, R555, and R587 each carry the asymmetric dimethylarginine modification.

The protein belongs to the TAF6 family. The PCAF complex is composed of a number of TBP-associated factors (TAFS), such as TAF5, TAF5L, TAF6, TAF6L, TAF9, TAF10 and TAF12, PCAF, and also PCAF-associated factors (PAFs), such as TADA2L/ADA2, TADA3L/ADA3 and SPT3. Component of the STAGA transcription coactivator-HAT complex, at least composed of SUPT3H, GCN5L2, TAF5L, TAF6L, SUPT7L, TADA3L, TAD1L, TAF10, TAF12, TRRAP and TAF9.

Its subcellular location is the nucleus. In terms of biological role, functions as a component of the PCAF complex. The PCAF complex is capable of efficiently acetylating histones in a nucleosomal context. The PCAF complex could be considered as the human version of the yeast SAGA complex. With TAF5L, acts as an epigenetic regulator essential for somatic reprogramming. Regulates target genes through H3K9ac deposition and MYC recruitment which trigger MYC regulatory network to orchestrate gene expression programs to control embryonic stem cell state. Functions with MYC to activate target gene expression through RNA polymerase II pause release. In Mus musculus (Mouse), this protein is TAF6-like RNA polymerase II p300/CBP-associated factor-associated factor 65 kDa subunit 6L.